The sequence spans 671 residues: DNA ligase (671 aa).

Residues 31–35 (DAEYD), 80–81 (SL), and E110 contribute to the NAD(+) site. The active-site N6-AMP-lysine intermediate is the K112. NAD(+) is bound by residues R133, E167, K283, and K307. C401, C404, C419, and C424 together coordinate Zn(2+). Positions 587-671 (EEELVFAGKT…YLPDEGGLNE (85 aa)) constitute a BRCT domain.

The protein belongs to the NAD-dependent DNA ligase family. LigA subfamily. It depends on Mg(2+) as a cofactor. Mn(2+) serves as cofactor.

It carries out the reaction NAD(+) + (deoxyribonucleotide)n-3'-hydroxyl + 5'-phospho-(deoxyribonucleotide)m = (deoxyribonucleotide)n+m + AMP + beta-nicotinamide D-nucleotide.. Its function is as follows. DNA ligase that catalyzes the formation of phosphodiester linkages between 5'-phosphoryl and 3'-hydroxyl groups in double-stranded DNA using NAD as a coenzyme and as the energy source for the reaction. It is essential for DNA replication and repair of damaged DNA. In Listeria monocytogenes serotype 4b (strain CLIP80459), this protein is DNA ligase.